The sequence spans 537 residues: Tripeptidyl aminopeptidase (537 aa).

The N-terminal stretch at 1–36 is a signal peptide; it reads MRKSSIRRRATAFGTAGALVTATLIAGAVSAPAASA. Residues 37 to 39 constitute a propeptide that is removed on maturation; it reads APA. The AB hydrolase-1 domain maps to 119-497; it reads GALIYNPGGP…SRLITERDAG (379 aa). Catalysis depends on Ser245, which acts as the Nucleophile. The active site involves Asp470. The Proton donor role is filled by His499.

The protein belongs to the peptidase S33 family.

It is found in the secreted. Functionally, cleaves tripeptides from the N-termini of proteins. Does not cleave mono- or dipeptides, or N-terminally blocked peptides. The chain is Tripeptidyl aminopeptidase from Streptomyces lividans.